Reading from the N-terminus, the 394-residue chain is Elongation factor Tu (394 aa).

Residues 10–204 form the tr-type G domain; the sequence is KPHVNVGTIG…ALDTYIPEPE (195 aa). The G1 stretch occupies residues 19–26; it reads GHVDHGKT. GTP is bound at residue 19–26; the sequence is GHVDHGKT. Threonine 26 is a Mg(2+) binding site. A G2 region spans residues 60-64; it reads GITIN. Residues 81–84 are G3; sequence DCPG. Residues 81-85 and 136-139 contribute to the GTP site; these read DCPGH and NKCD. The interval 136-139 is G4; the sequence is NKCD. The G5 stretch occupies residues 174–176; sequence SAL.

This sequence belongs to the TRAFAC class translation factor GTPase superfamily. Classic translation factor GTPase family. EF-Tu/EF-1A subfamily. In terms of assembly, monomer.

The protein resides in the cytoplasm. It catalyses the reaction GTP + H2O = GDP + phosphate + H(+). In terms of biological role, GTP hydrolase that promotes the GTP-dependent binding of aminoacyl-tRNA to the A-site of ribosomes during protein biosynthesis. The polypeptide is Elongation factor Tu (Shewanella denitrificans (strain OS217 / ATCC BAA-1090 / DSM 15013)).